Consider the following 349-residue polypeptide: UDP-N-acetylenolpyruvoylglucosamine reductase (349 aa).

An FAD-binding PCMH-type domain is found at 17–187 (VNESADLIIQ…TAITLRLNKQ (171 aa)). Residue arginine 163 is part of the active site. Catalysis depends on serine 233, which acts as the Proton donor. Glutamate 328 is an active-site residue.

It belongs to the MurB family. FAD is required as a cofactor.

It localises to the cytoplasm. It catalyses the reaction UDP-N-acetyl-alpha-D-muramate + NADP(+) = UDP-N-acetyl-3-O-(1-carboxyvinyl)-alpha-D-glucosamine + NADPH + H(+). Its pathway is cell wall biogenesis; peptidoglycan biosynthesis. Cell wall formation. The protein is UDP-N-acetylenolpyruvoylglucosamine reductase of Aliivibrio fischeri (strain ATCC 700601 / ES114) (Vibrio fischeri).